The sequence spans 225 residues: Superantigen-like protein 11 (225 aa).

The N-terminal stretch at 1–30 (MKLKNIAKASLALGILTTGMITTTAQPVKA) is a signal peptide. Residues 94 to 196 (VDIFVVRENS…RITMKDGGFY (103 aa)) are sialyl Lewis X-binding.

This sequence belongs to the staphylococcal/streptococcal toxin family. In terms of assembly, homodimer (via its C-terminal domain). Interacts with host FCAR and SELPLG (via sialyl Lewis X).

Its subcellular location is the secreted. Its function is as follows. Secreted protein that plays a role in the inhibition of host immune system. Targets myeloid cells such as monocytes or granulocytes through binding with sialyllactosamine-containing glycoproteins. Prevents initial rolling of neutrophils toward the site of infection by interacting with host SELPLG. Disrupts neutrophil motility by induction of cell adhesion via interacting with glycans but independently of SELPLG. The chain is Superantigen-like protein 11 from Staphylococcus aureus (strain Newman).